The sequence spans 166 residues: Myosin regulatory light chain 2, ventricular/cardiac muscle isoform (166 aa).

Position 2 is a n,N,N-trimethylalanine (A2). A phosphoserine; by MLCK mark is found at S14 and S15. S19 is subject to Phosphoserine. 3 consecutive EF-hand domains span residues T24–V59, D94–R129, and F130–K165. Ca(2+) is bound by residues D37, N39, D41, and D48. T52 carries the phosphothreonine modification.

As to quaternary structure, myosin is a hexamer of 2 heavy chains and 4 light chains. Interacts with MYOC. N-terminus is methylated by METTL11A/NTM1. Post-translationally, phosphorylated by MYLK3 and MYLK2; promotes cardiac muscle contraction and function. Dephosphorylated by PPP1CB complexed to PPP1R12B. The phosphorylated form in adult is expressed as gradients across the heart from endocardium (low phosphorylation) to epicardium (high phosphorylation); regulates cardiac torsion and workload distribution. Abundantly expressed in both cardiac and slow skeletal muscle. In the adult heart, the phosphorylated form is highly expressed in epicardium and weakly in endocardium.

It is found in the cytoplasm. Its subcellular location is the myofibril. The protein resides in the sarcomere. It localises to the a band. Contractile protein that plays a role in heart development and function. Following phosphorylation, plays a role in cross-bridge cycling kinetics and cardiac muscle contraction by increasing myosin lever arm stiffness and promoting myosin head diffusion; as a consequence of the increase in maximum contraction force and calcium sensitivity of contraction force. These events altogether slow down myosin kinetics and prolong duty cycle resulting in accumulated myosins being cooperatively recruited to actin binding sites to sustain thin filament activation as a means to fine-tune myofilament calcium sensitivity to force. During cardiogenesis plays an early role in cardiac contractility by promoting cardiac myofibril assembly. This is Myosin regulatory light chain 2, ventricular/cardiac muscle isoform from Mus musculus (Mouse).